Consider the following 306-residue polypeptide: [methyl-Co(III) glycine betaine-specific corrinoid protein]--tetrahydrofolate methyltransferase (306 aa).

It belongs to the MtrH family.

The enzyme catalyses methyl-Co(III)-[glycine betaine-specific corrinoid protein] + (6S)-5,6,7,8-tetrahydrofolate = Co(I)-[glycine betaine-specific corrinoid protein] + (6S)-5-methyl-5,6,7,8-tetrahydrofolate + H(+). In terms of biological role, methyltransferase able to catalyze the transfer of a methyl group from methylcobalamin (methylCbl) to tetrahydrofolate (THF) in vitro, to generate methyl-THF and cob(I)alamin. In vivo, the methyl group probably comes from the adjacently encoded methylated corrinoid protein DSY3155. The methyl group may then be ultimately converted to carbon dioxide, and its oxidation would also provide reducing equivalents for anaerobic respiration. Thus, may function in the pathway that allows anaerobic methylotrophic growth of D.hafniense using glycine betaine. The chain is [methyl-Co(III) glycine betaine-specific corrinoid protein]--tetrahydrofolate methyltransferase from Desulfitobacterium hafniense (strain Y51).